The primary structure comprises 565 residues: DNA primase (565 aa).

The CHC2-type zinc-finger motif lies at 37 to 61 (CPFHSETNPSFYVHPGLKIYHCFGC). The region spanning 248–329 (GFFVITEGYF…NVLVATPSPY (82 aa)) is the Toprim domain. Mg(2+) contacts are provided by Glu-254, Asp-298, and Asp-300.

The protein belongs to the DnaG primase family. As to quaternary structure, monomer. Interacts with DnaB. Zn(2+) is required as a cofactor. Mg(2+) serves as cofactor.

It carries out the reaction ssDNA + n NTP = ssDNA/pppN(pN)n-1 hybrid + (n-1) diphosphate.. Functionally, RNA polymerase that catalyzes the synthesis of short RNA molecules used as primers for DNA polymerase during DNA replication. The polypeptide is DNA primase (Thermotoga maritima (strain ATCC 43589 / DSM 3109 / JCM 10099 / NBRC 100826 / MSB8)).